Here is a 496-residue protein sequence, read N- to C-terminus: Cytochrome c-552 (496 aa).

The N-terminal stretch at 1-23 is a signal peptide; it reads MKKYKFLFAISIIAIGLMTVLLA. His-100 provides a ligand contact to heme c. 3 residues coordinate heme: Cys-128, Cys-131, and Lys-132. Cys-166, Cys-169, His-170, Cys-210, Cys-213, and His-214 together coordinate heme c. 4 residues coordinate Ca(2+): Glu-216, Tyr-217, Lys-269, and Gln-271. Tyr-217 serves as a coordination point for substrate. His-272 contacts substrate. Residues His-283, Cys-290, Cys-293, His-294, His-308, Cys-321, Cys-324, His-325, and His-400 each contribute to the heme c site.

Belongs to the cytochrome c-552 family. Requires Ca(2+) as cofactor. Heme c is required as a cofactor.

The protein localises to the periplasm. It carries out the reaction 6 Fe(III)-[cytochrome c] + NH4(+) + 2 H2O = 6 Fe(II)-[cytochrome c] + nitrite + 8 H(+). Its pathway is nitrogen metabolism; nitrate reduction (assimilation). Its function is as follows. Catalyzes the reduction of nitrite to ammonia, consuming six electrons in the process. The protein is Cytochrome c-552 of Aliarcobacter butzleri (strain RM4018) (Arcobacter butzleri).